The primary structure comprises 1158 residues: ATP-dependent helicase/deoxyribonuclease subunit B (1158 aa).

It belongs to the helicase family. AddB/RexB type 2 subfamily. As to quaternary structure, heterodimer of AddA and RexB. Mg(2+) serves as cofactor.

In terms of biological role, the heterodimer acts as both an ATP-dependent DNA helicase and an ATP-dependent, dual-direction single-stranded exonuclease. Recognizes the chi site generating a DNA molecule suitable for the initiation of homologous recombination. This subunit has 5' -&gt; 3' nuclease activity but not helicase activity. This chain is ATP-dependent helicase/deoxyribonuclease subunit B, found in Lactobacillus gasseri (strain ATCC 33323 / DSM 20243 / BCRC 14619 / CIP 102991 / JCM 1131 / KCTC 3163 / NCIMB 11718 / NCTC 13722 / AM63).